Consider the following 569-residue polypeptide: Urease subunit alpha (569 aa).

A Urease domain is found at 131-569 (GSIDTHIHFI…VPMAQRYFLL (439 aa)). Positions 136, 138, and 219 each coordinate Ni(2+). K219 is subject to N6-carboxylysine. A substrate-binding site is contributed by H221. Residues H248 and H274 each contribute to the Ni(2+) site. H322 functions as the Proton donor in the catalytic mechanism. Residue D362 coordinates Ni(2+).

It belongs to the metallo-dependent hydrolases superfamily. Urease alpha subunit family. In terms of assembly, heterotrimer of UreA (gamma), UreB (beta) and UreC (alpha) subunits. Three heterotrimers associate to form the active enzyme. Ni cation serves as cofactor. Carboxylation allows a single lysine to coordinate two nickel ions.

It localises to the cytoplasm. The catalysed reaction is urea + 2 H2O + H(+) = hydrogencarbonate + 2 NH4(+). It participates in nitrogen metabolism; urea degradation; CO(2) and NH(3) from urea (urease route): step 1/1. The polypeptide is Urease subunit alpha (Prochlorococcus marinus (strain AS9601)).